We begin with the raw amino-acid sequence, 349 residues long: UDP-3-O-acylglucosamine N-acyltransferase (349 aa).

The active-site Proton acceptor is the histidine 240.

Belongs to the transferase hexapeptide repeat family. LpxD subfamily. As to quaternary structure, homotrimer.

It carries out the reaction a UDP-3-O-[(3R)-3-hydroxyacyl]-alpha-D-glucosamine + a (3R)-hydroxyacyl-[ACP] = a UDP-2-N,3-O-bis[(3R)-3-hydroxyacyl]-alpha-D-glucosamine + holo-[ACP] + H(+). It participates in bacterial outer membrane biogenesis; LPS lipid A biosynthesis. Its function is as follows. Catalyzes the N-acylation of UDP-3-O-acylglucosamine using 3-hydroxyacyl-ACP as the acyl donor. Is involved in the biosynthesis of lipid A, a phosphorylated glycolipid that anchors the lipopolysaccharide to the outer membrane of the cell. In Porphyromonas gingivalis (strain ATCC BAA-308 / W83), this protein is UDP-3-O-acylglucosamine N-acyltransferase.